The primary structure comprises 629 residues: tRNA uridine 5-carboxymethylaminomethyl modification enzyme MnmG (629 aa).

Residues 13–18 (GGGHAG), V125, and S180 each bind FAD. 273 to 287 (GPRYCPSIEDKVMRF) is an NAD(+) binding site. Residue Q370 coordinates FAD.

It belongs to the MnmG family. Homodimer. Heterotetramer of two MnmE and two MnmG subunits. FAD is required as a cofactor.

It is found in the cytoplasm. NAD-binding protein involved in the addition of a carboxymethylaminomethyl (cmnm) group at the wobble position (U34) of certain tRNAs, forming tRNA-cmnm(5)s(2)U34. The protein is tRNA uridine 5-carboxymethylaminomethyl modification enzyme MnmG of Salmonella typhi.